The sequence spans 293 residues: Elongation factor Ts (293 aa).

Positions 80-83 are involved in Mg(2+) ion dislocation from EF-Tu; it reads TDFV.

The protein belongs to the EF-Ts family.

The protein resides in the cytoplasm. Associates with the EF-Tu.GDP complex and induces the exchange of GDP to GTP. It remains bound to the aminoacyl-tRNA.EF-Tu.GTP complex up to the GTP hydrolysis stage on the ribosome. The polypeptide is Elongation factor Ts (Burkholderia multivorans (strain ATCC 17616 / 249)).